The primary structure comprises 273 residues: Dermonecrotic toxin LspaSicTox-alphaIA2iii (273 aa).

H5 is a catalytic residue. Residues E25 and D27 each coordinate Mg(2+). The Nucleophile role is filled by H41. Intrachain disulfides connect C45/C51 and C47/C190. Residue D85 participates in Mg(2+) binding.

This sequence belongs to the arthropod phospholipase D family. Class II subfamily. Requires Mg(2+) as cofactor. Expressed by the venom gland.

The protein resides in the secreted. The catalysed reaction is an N-(acyl)-sphingosylphosphocholine = an N-(acyl)-sphingosyl-1,3-cyclic phosphate + choline. It carries out the reaction an N-(acyl)-sphingosylphosphoethanolamine = an N-(acyl)-sphingosyl-1,3-cyclic phosphate + ethanolamine. It catalyses the reaction a 1-acyl-sn-glycero-3-phosphocholine = a 1-acyl-sn-glycero-2,3-cyclic phosphate + choline. The enzyme catalyses a 1-acyl-sn-glycero-3-phosphoethanolamine = a 1-acyl-sn-glycero-2,3-cyclic phosphate + ethanolamine. Dermonecrotic toxins cleave the phosphodiester linkage between the phosphate and headgroup of certain phospholipids (sphingolipid and lysolipid substrates), forming an alcohol (often choline) and a cyclic phosphate. This toxin acts on sphingomyelin (SM). It may also act on ceramide phosphoethanolamine (CPE), lysophosphatidylcholine (LPC) and lysophosphatidylethanolamine (LPE), but not on lysophosphatidylserine (LPS), and lysophosphatidylglycerol (LPG). It acts by transphosphatidylation, releasing exclusively cyclic phosphate products as second products. Induces dermonecrosis, hemolysis, increased vascular permeability, edema, inflammatory response, and platelet aggregation. This chain is Dermonecrotic toxin LspaSicTox-alphaIA2iii, found in Loxosceles spadicea (Recluse spider).